Here is a 611-residue protein sequence, read N- to C-terminus: Zinc metalloproteinase-disintegrin-like ohanin (611 aa).

An N-terminal signal peptide occupies residues 1-20; it reads MIQVLLVTICLVVFPYQGSS. The propeptide occupies 21–187; that stretch reads IILESGKVND…WESDEPIEKI (167 aa). The Peptidase M12B domain occupies 198–393; the sequence is KYLELYIVAD…DTPQCLINKP (196 aa). N-linked (GlcNAc...) asparagine glycans are attached at residues Asn217 and Asn260. 3 disulfides stabilise this stretch: Cys307/Cys388, Cys347/Cys372, and Cys349/Cys354. His332 contributes to the Zn(2+) binding site. Glu333 is an active-site residue. 2 residues coordinate Zn(2+): His336 and His342. Asn395 carries N-linked (GlcNAc...) asparagine glycosylation. In terms of domain architecture, Disintegrin spans 401-487; sequence NAVCGNYVEE…ECPMDRFHKN (87 aa). 14 disulfides stabilise this stretch: Cys404/Cys433, Cys415/Cys428, Cys417/Cys423, Cys427/Cys450, Cys441/Cys447, Cys446/Cys472, Cys459/Cys479, Cys466/Cys498, Cys491/Cys503, Cys510/Cys560, Cys525/Cys578, Cys538/Cys548, Cys555/Cys603, and Cys597/Cys608. Positions 465-467 match the D/ECD-tripeptide motif; the sequence is ECD. Asn528 carries an N-linked (GlcNAc...) asparagine glycan.

This sequence belongs to the venom metalloproteinase (M12B) family. P-III subfamily. P-IIIa sub-subfamily. As to quaternary structure, monomer. It depends on Zn(2+) as a cofactor. Expressed by the venom gland.

It is found in the secreted. With respect to regulation, inhibited by EDTA, but not by PMSF. In terms of biological role, snake venom zinc metalloproteinase that has hemorrhagic activity. Inhibits ADP-, TMVA- and stejnulxin-induced platelet aggregation in a dose-dependent manner (on washed platelet, but not on platelet rich plasm). Also specifically degrades alpha-chain of fibrinogen (FGA). The chain is Zinc metalloproteinase-disintegrin-like ohanin from Ophiophagus hannah (King cobra).